The chain runs to 340 residues: Organic solute transporter subunit alpha (340 aa).

Over 1-48 (MEPGRTHIKLDPRYTAELLELLETNYSISPACFSHPPTAAQLLRALGP) the chain is Extracellular. Asn-25 is a glycosylation site (N-linked (GlcNAc...) asparagine). The helical transmembrane segment at 49–69 (VDIALTIILTFLTTGSVAIFL) threads the bilayer. The Cytoplasmic portion of the chain corresponds to 70–87 (EDAVYLYKNTLCPIKKRT). A helical transmembrane segment spans residues 88–108 (LIWSSSAPTVVSVFCCFGLWI). Topologically, residues 109 to 114 (PRALTL) are extracellular. Residues 115 to 135 (VEMAITSFYAVCFYLLMMVMV) traverse the membrane as a helical segment. The Cytoplasmic portion of the chain corresponds to 136 to 181 (EGFGGKKAVLRTLKDTPMRVHTGPCCCCCPCCPPLILTRKKLQLLL). Residues 182–202 (LGPFQYAFFKITLSIVGLFLI) form a helical membrane-spanning segment. Topologically, residues 203 to 219 (PDGIYDPGEISEKSAAL) are extracellular. A helical transmembrane segment spans residues 220–240 (WINNLLAVSTLLALWSLAILF). The Cytoplasmic segment spans residues 241 to 255 (RQAKMHLGEQNMGSK). A helical transmembrane segment spans residues 256–276 (FALFQVLVILTALQPAIFSIL). Over 277-297 (ANSGQIACSPPYSSKIRSQVM) the chain is Extracellular. The chain crosses the membrane as a helical span at residues 298–317 (NCHMLILETFLMTVLTRMYY). At 318-340 (RRKDDKVGYEACSLPDLDSALKA) the chain is on the cytoplasmic side. Ser-330 is modified (phosphoserine).

This sequence belongs to the OST-alpha family. In terms of assembly, interacts with SLC51B. The Ost-alpha/Ost-beta complex is a heterodimer composed of alpha (SLC51A) and beta (SLC51B) subunit. N-glycosylated. As to expression, present at high levels in ileum. In ileum, it is restricted to the apical domain on the mature villus enterocytes with little detectable expression in the goblet cells or crypt enterocytes (at protein level). Expressed in kidney but not in heart, brain, liver, spleen, embryo, lung, thymus, ovary nor testis.

Its subcellular location is the cell membrane. It is found in the endoplasmic reticulum membrane. The catalysed reaction is taurocholate(out) = taurocholate(in). The enzyme catalyses tauroursodeoxycholate(out) = tauroursodeoxycholate(in). It catalyses the reaction glycoursodeoxycholate(out) = glycoursodeoxycholate(in). It carries out the reaction glycocholate(out) = glycocholate(in). The catalysed reaction is taurochenodeoxycholate(out) = taurochenodeoxycholate(in). The enzyme catalyses glycochenodeoxycholate(out) = glycochenodeoxycholate(in). It catalyses the reaction taurodeoxycholate(out) = taurodeoxycholate(in). It carries out the reaction glycodeoxycholate(out) = glycodeoxycholate(in). The catalysed reaction is prostaglandin E2(out) = prostaglandin E2(in). The enzyme catalyses estrone 3-sulfate(out) = estrone 3-sulfate(in). It catalyses the reaction dehydroepiandrosterone 3-sulfate(out) = dehydroepiandrosterone 3-sulfate(in). Functionally, essential component of the Ost-alpha/Ost-beta complex, a heterodimer that acts as the intestinal basolateral transporter responsible for bile acid export from enterocytes into portal blood. Efficiently transports the major species of bile acids (taurocholate). Taurine conjugates are transported more efficiently across the basolateral membrane than glycine-conjugated bile acids. Can also transport steroids such as estrone 3-sulfate and dehydroepiandrosterone 3-sulfate, therefore playing a role in the enterohepatic circulation of sterols. Able to transport eicosanoids such as prostaglandin E2. The protein is Organic solute transporter subunit alpha (Slc51a) of Mus musculus (Mouse).